The primary structure comprises 143 residues: Transcriptional regulator MraZ (143 aa).

SpoVT-AbrB domains are found at residues 5-47 (QYEH…SLEE) and 76-119 (AVEC…SKEV).

This sequence belongs to the MraZ family. As to quaternary structure, forms oligomers.

It is found in the cytoplasm. The protein resides in the nucleoid. The polypeptide is Transcriptional regulator MraZ (Thermoanaerobacter sp. (strain X514)).